Here is a 487-residue protein sequence, read N- to C-terminus: Serine/threonine-protein kinase 4 (487 aa).

N-acetylmethionine is present on M1. At T3 the chain carries Phosphothreonine. The Protein kinase domain maps to 30 to 281; it reads FDVLEKLGEG…ATQLLQHPFV (252 aa). ATP is bound by residues 36–44 and K59; that span reads LGEGSYGSV. The Proton acceptor role is filled by D149. T183 carries the phosphothreonine; by autocatalysis modification. S265 and S320 each carry phosphoserine. A coiled-coil region spans residues 289–327; sequence ILRDLINEAMDVKLKRQEAQQREVDQEEEENSEEDELDS. Residues 305-332 form a disordered region; the sequence is QEAQQREVDQEEEENSEEDELDSGTMVR. Positions 313 to 326 are enriched in acidic residues; it reads DQEEEENSEEDELD. A phosphothreonine mark is found at T340 and T367. A Phosphothreonine; by PKB/AKT1 modification is found at T387. A phosphoserine mark is found at S410 and S414. Residue Y433 is modified to Phosphotyrosine. The region spanning 433 to 480 is the SARAH domain; it reads YEFLKSWTVEDLQKRLLALDPMMEQEIEEIRQKYQSKRQPILDAIEAK.

It belongs to the protein kinase superfamily. STE Ser/Thr protein kinase family. STE20 subfamily. As to quaternary structure, homodimer; mediated via the coiled-coil region. Interacts with NORE1, which inhibits autoactivation. Interacts with and stabilizes SAV1. Interacts with RASSF1. Interacts with FOXO3. Interacts with RASSF2 (via SARAH domain). Interacts with AR, PKB/AKT1, TNNI3 and SIRT1. Interacts with DLG5 (via PDZ domain 3). Interacts with MARK3 and SCRIB in the presence of DLG5. Mg(2+) serves as cofactor. Autophosphorylated on serine and threonine residues. Phosphorylation at Thr-387 by PKB/AKT1, leads to inhibition of its: kinase activity, nuclear translocation and autophosphorylation at Thr-183. It also diminishes its cleavage by caspases and its ability to phosphorylate FOXO3. In terms of processing, proteolytically cleaved by caspase-3 during apoptosis at Asp-326 and Asp-349 resulting in a 37 kDa or a 39 kDa subunit respectively. The 39 kDa subunit is further cleaved into the 37 kDa form. Proteolytic cleavage results in kinase activation and nuclear translocation of the truncated form (MST1/N). It is less likely that cleavage at Asp-349 is a prerequisite for activation as this site is not conserved in the murine ortholog.

It is found in the cytoplasm. It localises to the nucleus. It carries out the reaction L-seryl-[protein] + ATP = O-phospho-L-seryl-[protein] + ADP + H(+). It catalyses the reaction L-threonyl-[protein] + ATP = O-phospho-L-threonyl-[protein] + ADP + H(+). With respect to regulation, inhibited by the C-terminal non-catalytic region. Activated by caspase-cleavage. Full activation also requires homodimerization and autophosphorylation of Thr-183. Activated by RASSF1 which acts by preventing its dephosphorylation. Functionally, stress-activated, pro-apoptotic kinase which, following caspase-cleavage, enters the nucleus and induces chromatin condensation followed by internucleosomal DNA fragmentation. Key component of the Hippo signaling pathway which plays a pivotal role in organ size control and tumor suppression by restricting proliferation and promoting apoptosis. The core of this pathway is composed of a kinase cascade wherein STK3/MST2 and STK4/MST1, in complex with its regulatory protein SAV1, phosphorylates and activates LATS1/2 in complex with its regulatory protein MOB1, which in turn phosphorylates and inactivates YAP1 oncoprotein and WWTR1/TAZ. Phosphorylation of YAP1 by LATS2 inhibits its translocation into the nucleus to regulate cellular genes important for cell proliferation, cell death, and cell migration. STK3/MST2 and STK4/MST1 are required to repress proliferation of mature hepatocytes, to prevent activation of facultative adult liver stem cells (oval cells), and to inhibit tumor formation. Phosphorylates 'Ser-14' of histone H2B (H2BS14ph) during apoptosis. Phosphorylates FOXO3 upon oxidative stress, which results in its nuclear translocation and cell death initiation. Phosphorylates MOBKL1A, MOBKL1B and RASSF2. Phosphorylates TNNI3 (cardiac Tn-I) and alters its binding affinity to TNNC1 (cardiac Tn-C) and TNNT2 (cardiac Tn-T). Phosphorylates FOXO1 on 'Ser-212' and regulates its activation and stimulates transcription of PMAIP1 in a FOXO1-dependent manner. Phosphorylates SIRT1 and inhibits SIRT1-mediated p53/TP53 deacetylation, thereby promoting p53/TP53 dependent transcription and apoptosis upon DNA damage. Acts as an inhibitor of PKB/AKT1. Phosphorylates AR on 'Ser-650' and suppresses its activity by intersecting with PKB/AKT1 signaling and antagonizing formation of AR-chromatin complexes. The protein is Serine/threonine-protein kinase 4 (STK4) of Bos taurus (Bovine).